The following is a 95-amino-acid chain: Aspartyl/glutamyl-tRNA(Asn/Gln) amidotransferase subunit C (95 aa).

This sequence belongs to the GatC family. In terms of assembly, heterotrimer of A, B and C subunits.

The catalysed reaction is L-glutamyl-tRNA(Gln) + L-glutamine + ATP + H2O = L-glutaminyl-tRNA(Gln) + L-glutamate + ADP + phosphate + H(+). It carries out the reaction L-aspartyl-tRNA(Asn) + L-glutamine + ATP + H2O = L-asparaginyl-tRNA(Asn) + L-glutamate + ADP + phosphate + 2 H(+). Allows the formation of correctly charged Asn-tRNA(Asn) or Gln-tRNA(Gln) through the transamidation of misacylated Asp-tRNA(Asn) or Glu-tRNA(Gln) in organisms which lack either or both of asparaginyl-tRNA or glutaminyl-tRNA synthetases. The reaction takes place in the presence of glutamine and ATP through an activated phospho-Asp-tRNA(Asn) or phospho-Glu-tRNA(Gln). In Beijerinckia indica subsp. indica (strain ATCC 9039 / DSM 1715 / NCIMB 8712), this protein is Aspartyl/glutamyl-tRNA(Asn/Gln) amidotransferase subunit C.